We begin with the raw amino-acid sequence, 270 residues long: tRNA pseudouridine synthase A (270 aa).

Aspartate 60 (nucleophile) is an active-site residue. Residues 107-111 (FHARF) are RNA binding. Tyrosine 118 contributes to the substrate binding site. An interaction with tRNA region spans residues 168 to 172 (QCQSR).

The protein belongs to the tRNA pseudouridine synthase TruA family. Homodimer.

It carries out the reaction uridine(38/39/40) in tRNA = pseudouridine(38/39/40) in tRNA. Its function is as follows. Formation of pseudouridine at positions 38, 39 and 40 in the anticodon stem and loop of transfer RNAs. This chain is tRNA pseudouridine synthase A, found in Shigella boydii serotype 4 (strain Sb227).